Consider the following 472-residue polypeptide: Glutamine synthetase (472 aa).

Positions 17-101 constitute a GS beta-grasp domain; sequence YDIKFVLLRF…LRCSIYEPST (85 aa). The GS catalytic domain maps to 109–472; sequence PRSIAIRAEN…HPVEFEMYYA (364 aa). Residues E134 and E136 each coordinate Mg(2+). E212 contacts ATP. The Mg(2+) site is built by E217 and E225. Residues 269 to 270 and G270 each bind L-glutamate; that span reads NG. H274 contributes to the Mg(2+) binding site. Residues 276–278 and S278 each bind ATP; that span reads NMS. Positions 326, 332, and 344 each coordinate L-glutamate. 3 residues coordinate ATP: R344, R349, and K357. E362 is a Mg(2+) binding site. Residue R364 coordinates L-glutamate. Y402 bears the O-AMP-tyrosine mark.

The protein belongs to the glutamine synthetase family. In terms of assembly, oligomer of 12 subunits arranged in the form of two hexameric ring. Requires Mg(2+) as cofactor.

It is found in the cytoplasm. The enzyme catalyses L-glutamate + NH4(+) + ATP = L-glutamine + ADP + phosphate + H(+). With respect to regulation, the activity of this enzyme could be controlled by adenylation under conditions of abundant glutamine. Functionally, catalyzes the ATP-dependent biosynthesis of glutamine from glutamate and ammonia. In Pasteurella multocida (strain Pm70), this protein is Glutamine synthetase.